The primary structure comprises 1003 residues: Cytosolic carboxypeptidase 3 (1003 aa).

The interval 1–23 is disordered; that stretch reads MSEDSEKEDYSDRTISDEDESDE. One can recognise a Peptidase M14 domain in the interval 299–570; it reads YPYTYTNLQE…HFCDSLLDYC (272 aa). 3 residues coordinate Zn(2+): His364, Glu367, and His460. Glu534 serves as the catalytic Proton donor/acceptor. 2 disordered regions span residues 642–662 and 911–1003; these read KQLK…NIRE and KSSE…QRDT. Positions 649–662 are enriched in basic and acidic residues; sequence ERNSTIERHQNIRE. Over residues 922–934 the composition is skewed to basic residues; the sequence is PKKRRKYSRVKAT. The span at 963–976 shows a compositional bias: polar residues; sequence AEGSSQQGTMQTAP.

It belongs to the peptidase M14 family. It depends on Zn(2+) as a cofactor.

Its subcellular location is the cytoplasm. The protein resides in the cytosol. The enzyme catalyses (L-glutamyl)(n+1)-gamma-L-glutamyl-L-glutamyl-[protein] + H2O = (L-glutamyl)(n)-gamma-L-glutamyl-L-glutamyl-[protein] + L-glutamate. In terms of biological role, metallocarboxypeptidase that mediates deglutamylation of tubulin and non-tubulin target proteins. Catalyzes the removal of polyglutamate side chains present on the gamma-carboxyl group of glutamate residues within the C-terminal tail of tubulin protein. Specifically cleaves tubulin long-side-chains, while it is not able to remove the branching point glutamate. Also catalyzes the removal of polyglutamate residues from the carboxy-terminus of non-tubulin proteins such as MYLK. May catalyze the hydrolysis of aspartate from the carboxy-terminus of target proteins. Does not show detyrosinase or deglycylase activities from the carboxy-terminus of target proteins. This is Cytosolic carboxypeptidase 3 (AGBL3) from Bos taurus (Bovine).